A 78-amino-acid chain; its full sequence is Large ribosomal subunit protein bL28 (78 aa).

This sequence belongs to the bacterial ribosomal protein bL28 family.

The polypeptide is Large ribosomal subunit protein bL28 (Methylobacillus flagellatus (strain ATCC 51484 / DSM 6875 / VKM B-1610 / KT)).